The primary structure comprises 449 residues: Required for meiotic nuclear division protein 1 homolog (449 aa).

A mitochondrion-targeting transit peptide spans 1 to 12 (MPATLLRAVARS).

This sequence belongs to the RMD1/sif2 family. Homooligomer.

Its subcellular location is the mitochondrion. Functionally, required for mitochondrial translation, possibly by coordinating the assembly or maintenance of the mitochondrial ribosome. This chain is Required for meiotic nuclear division protein 1 homolog (RMND1), found in Homo sapiens (Human).